We begin with the raw amino-acid sequence, 104 residues long: Nucleoid-associated protein Ccon26_18480 (104 aa).

Residues 16–34 (DVQKQAKQMEEESKNKEFG) show a composition bias toward basic and acidic residues. Positions 16 to 38 (DVQKQAKQMEEESKNKEFGAKSG) are disordered.

The protein belongs to the YbaB/EbfC family. Homodimer.

The protein resides in the cytoplasm. It localises to the nucleoid. Functionally, binds to DNA and alters its conformation. May be involved in regulation of gene expression, nucleoid organization and DNA protection. The polypeptide is Nucleoid-associated protein Ccon26_18480 (Campylobacter concisus (strain 13826)).